An 88-amino-acid polypeptide reads, in one-letter code: N-alpha-acetyltransferase 38, NatC auxiliary subunit (88 aa).

The 72-residue stretch at 1-72 folds into the Sm domain; sequence MDILKLSDFI…VKTIMIDKPV (72 aa).

In terms of assembly, component of the N-terminal acetyltransferase C (NatC) complex, composed of the catalytic subunit Naa30/MAK3, a large auxiliary subunit Naa35/MAK10 and a small auxiliary subunit Naa38/MAK31.

Component of the NatC N-terminal acetyltransferase, which associates with the ribosome to acetylate nascent protein chains in a cotranslational manner. NatC acetylates protein N-termini starting with methionine, followed by a hydrophobic or amphipathic amino acid, with amino acids at positions 3 and 4 also contributing to NatC recognition. The first 4 amino acids of cognate substrates are recognized at the Naa30/MAK3-Naa35/MAK10 interface. NatC-dependent acetylation targets various substrate proteins to specific subcellular sites, including isoform 2 of tRNA-specific methyltransferase Trm1 to the inner nuclear membrane. Catalyzes the acetylation of the N-terminal Met of ARF-like GTPase ARL3, which is required for its Golgi localization via interaction with the Golgi-localized integral membrane protein SYS1, which may serve as a receptor for acetylated ARL3. Catalyzes the acetylation of the N-terminal Met of L-A virus Gag protein. MAK31 is necessary for the structural stability of L-A double-stranded RNA-containing particles. Necessary for growth at 37 degrees Celsius as well as for maintenance of the killer plasmid. The chain is N-alpha-acetyltransferase 38, NatC auxiliary subunit (MAK31) from Saccharomyces cerevisiae (strain ATCC 204508 / S288c) (Baker's yeast).